The following is a 358-amino-acid chain: Ganglioside-induced differentiation-associated protein 1 (358 aa).

The 82-residue stretch at 24–105 (VHLILYHWTH…YLEQTFLDER (82 aa)) folds into the GST N-terminal domain. Glycyl lysine isopeptide (Lys-Gly) (interchain with G-Cter in ubiquitin) cross-links involve residues K50, K172, K173, K188, and K190. Residues 153-309 (PAYATTRIRS…LISAVLPTAF (157 aa)) form the GST C-terminal domain. Residue K203 is modified to N6-acetyllysine; alternate. A Glycyl lysine isopeptide (Lys-Gly) (interchain with G-Cter in ubiquitin); alternate cross-link involves residue K203. Residues K206, K207, and K214 each participate in a glycyl lysine isopeptide (Lys-Gly) (interchain with G-Cter in ubiquitin) cross-link. 2 consecutive transmembrane segments (helical) span residues 292 to 312 (VLGHVNNILISAVLPTAFRVA) and 320 to 340 (LGSTLVVGLLVGMGYFAFMLF). Residues 320-358 (LGSTLVVGLLVGMGYFAFMLFRRRLGSMILALRPRPNYF) form a required for mitochondrial localization region.

It belongs to the GST superfamily. In terms of assembly, homodimer. In terms of processing, ubiquitinated by PRKN during mitophagy, leading to its degradation and enhancement of mitophagy. Deubiquitinated by USP30. In terms of tissue distribution, expressed in brain, spinal cord, muscles and intestinal villi. In the central nervous system expressed most prominently in the cortex, cerebellum, thalamus, olfactory bulb, and spinal cord. Expressed also in sciatic nerves and in dorsal root ganglia.

The protein resides in the mitochondrion outer membrane. It is found in the cytoplasm. In terms of biological role, regulates the mitochondrial network by promoting mitochondrial fission. The chain is Ganglioside-induced differentiation-associated protein 1 (Gdap1) from Mus musculus (Mouse).